The primary structure comprises 944 residues: Putative ATP-dependent RNA helicase (944 aa).

The region spanning 66–235 (TTPRSPIDGI…VPLHNLLMKL (170 aa)) is the Helicase ATP-binding domain. An ATP-binding site is contributed by 79–86 (HGVGTGKT). A DEAH box motif is present at residues 183-186 (DEAH). The region spanning 451–523 (CLTREVMTVP…QIIGRGIRYQ (73 aa)) is the Helicase C-terminal domain.

The protein belongs to the DEAD box helicase family. DEAH subfamily.

It carries out the reaction ATP + H2O = ADP + phosphate + H(+). The chain is Putative ATP-dependent RNA helicase from Heliothis virescens ascovirus 3e (HvAV-3e).